The primary structure comprises 217 residues: Adenylate kinase (217 aa).

Gly-10–Thr-15 is an ATP binding site. The segment at Ser-30–Val-59 is NMP. Residues Thr-31, Arg-36, Ala-57–Val-59, Gly-85–Arg-88, and Gln-92 contribute to the AMP site. The tract at residues Gly-126–Asp-163 is LID. Arg-127 contacts ATP. Zn(2+)-binding residues include Cys-130, Cys-133, Cys-150, and Cys-153. AMP is bound by residues Arg-160 and Arg-171. Glu-199 provides a ligand contact to ATP.

The protein belongs to the adenylate kinase family. In terms of assembly, monomer.

Its subcellular location is the cytoplasm. The catalysed reaction is AMP + ATP = 2 ADP. Its pathway is purine metabolism; AMP biosynthesis via salvage pathway; AMP from ADP: step 1/1. Catalyzes the reversible transfer of the terminal phosphate group between ATP and AMP. Plays an important role in cellular energy homeostasis and in adenine nucleotide metabolism. The polypeptide is Adenylate kinase (Geobacter sulfurreducens (strain ATCC 51573 / DSM 12127 / PCA)).